The sequence spans 662 residues: UvrABC system protein B (662 aa).

The region spanning 31–188 (DNIEGGEKAQ…NDLVDIQFER (158 aa)) is the Helicase ATP-binding domain. ATP is bound at residue 44–51 (GATGTGKT). Positions 97–120 (YYDYYQPEAYVPSSDTYIEKDSSV) match the Beta-hairpin motif. A Helicase C-terminal domain is found at 435 to 601 (QIDDLLGEIN…TIKKEIRDLI (167 aa)). One can recognise a UVR domain in the interval 626–661 (KDMIKKLEGQMQEAAGLLDFELAAQIRDMILEIKAM).

It belongs to the UvrB family. As to quaternary structure, forms a heterotetramer with UvrA during the search for lesions. Interacts with UvrC in an incision complex.

It localises to the cytoplasm. In terms of biological role, the UvrABC repair system catalyzes the recognition and processing of DNA lesions. A damage recognition complex composed of 2 UvrA and 2 UvrB subunits scans DNA for abnormalities. Upon binding of the UvrA(2)B(2) complex to a putative damaged site, the DNA wraps around one UvrB monomer. DNA wrap is dependent on ATP binding by UvrB and probably causes local melting of the DNA helix, facilitating insertion of UvrB beta-hairpin between the DNA strands. Then UvrB probes one DNA strand for the presence of a lesion. If a lesion is found the UvrA subunits dissociate and the UvrB-DNA preincision complex is formed. This complex is subsequently bound by UvrC and the second UvrB is released. If no lesion is found, the DNA wraps around the other UvrB subunit that will check the other stand for damage. The protein is UvrABC system protein B of Streptococcus sanguinis (strain SK36).